The primary structure comprises 124 residues: UPF0299 membrane protein VP1300 (124 aa).

4 helical membrane-spanning segments follow: residues 9 to 29 (LIQL…GITI), 35 to 55 (VSVP…TLGL), 72 to 92 (MILL…MLLA), and 95 to 115 (LPII…LAWL).

It belongs to the UPF0299 family.

Its subcellular location is the cell inner membrane. This chain is UPF0299 membrane protein VP1300, found in Vibrio parahaemolyticus serotype O3:K6 (strain RIMD 2210633).